The following is a 111-amino-acid chain: Guanylate cyclase activator 2B (111 aa).

A signal peptide spans 1–26 (MGSRTLLGHLSVLAVVLLLLLQGTQS). Positions 27–96 (VDIKYQGYQV…SILQALRTMD (70 aa)) are excised as a propeptide. 3 cysteine pairs are disulfide-bonded: Cys-67/Cys-80, Cys-100/Cys-108, and Cys-103/Cys-111.

It belongs to the guanylin family.

The protein resides in the secreted. Endogenous activator of intestinal guanylate cyclase. It stimulates this enzyme through the same receptor binding region as the heat-stable enterotoxins. May be a potent physiological regulator of intestinal fluid and electrolyte transport. May be an autocrine/paracrine regulator of intestinal salt and water transport. This Cavia porcellus (Guinea pig) protein is Guanylate cyclase activator 2B (GUCA2B).